The sequence spans 32 residues: Photosystem II reaction center protein Z (32 aa).

A helical transmembrane segment spans residues 9-31; the sequence is FILIGSASWAALVLLVGSLNSFV.

Belongs to the PsbZ family. As to quaternary structure, PSII is composed of 1 copy each of membrane proteins PsbA, PsbB, PsbC, PsbD, PsbE, PsbF, PsbH, PsbI, PsbJ, PsbK, PsbL, PsbM, PsbT, PsbY, PsbZ, Psb30/Ycf12, at least 3 peripheral proteins of the oxygen-evolving complex and a large number of cofactors. It forms dimeric complexes.

The protein resides in the plastid. Its subcellular location is the chloroplast thylakoid membrane. Functionally, may control the interaction of photosystem II (PSII) cores with the light-harvesting antenna, regulates electron flow through the 2 photosystem reaction centers. PSII is a light-driven water plastoquinone oxidoreductase, using light energy to abstract electrons from H(2)O, generating a proton gradient subsequently used for ATP formation. This chain is Photosystem II reaction center protein Z, found in Euglena viridis (Cercaria viridis).